Consider the following 334-residue polypeptide: N,N'-diacetyllegionaminic acid synthase (334 aa).

One can recognise an AFP-like domain in the interval Ser282–Glu334.

The enzyme catalyses 2,4-diacetamido-2,4,6-trideoxy-alpha-D-mannopyranose + phosphoenolpyruvate + H2O = N,N-diacetyllegionaminate + phosphate. Involved in biosynthesis of legionaminic acid (5,7-diamino-3,5,7,9-tetradeoxy-D-glycero-D-galacto-non-2-ulosonic acid)(Leg), a sialic acid-like derivative that is incorporated into flagellin via O-linkage to Ser/Thr. Catalyzes the condensation of 2,4-diacetamido-2,4,6-trideoxymannose with phosphoenolpyruvate (PEP) to give N,N'-diacetyllegionaminic acid. The protein is N,N'-diacetyllegionaminic acid synthase (legI) of Campylobacter jejuni subsp. jejuni serotype O:2 (strain ATCC 700819 / NCTC 11168).